A 547-amino-acid chain; its full sequence is Chaperonin GroEL (547 aa).

Residues Thr30–Pro33, Lys51, Asp87–Thr91, Gly415, and Asp496 contribute to the ATP site.

It belongs to the chaperonin (HSP60) family. In terms of assembly, forms a cylinder of 14 subunits composed of two heptameric rings stacked back-to-back. Interacts with the co-chaperonin GroES.

The protein resides in the cytoplasm. It catalyses the reaction ATP + H2O + a folded polypeptide = ADP + phosphate + an unfolded polypeptide.. Functionally, together with its co-chaperonin GroES, plays an essential role in assisting protein folding. The GroEL-GroES system forms a nano-cage that allows encapsulation of the non-native substrate proteins and provides a physical environment optimized to promote and accelerate protein folding. In Mannheimia succiniciproducens (strain KCTC 0769BP / MBEL55E), this protein is Chaperonin GroEL.